Reading from the N-terminus, the 311-residue chain is Mycothiol acetyltransferase (311 aa).

Glu-35 lines the 1D-myo-inositol 2-(L-cysteinylamino)-2-deoxy-alpha-D-glucopyranoside pocket. Acetyl-CoA is bound at residue 79–81 (LVV). One can recognise an N-acetyltransferase domain in the interval 155-311 (VRTYVGTVDD…TAYALARIDD (157 aa)). 1D-myo-inositol 2-(L-cysteinylamino)-2-deoxy-alpha-D-glucopyranoside contacts are provided by Glu-180, Lys-225, and Glu-235. Acetyl-CoA contacts are provided by residues 239 to 241 (LGV) and 246 to 252 (QGRGLGQ). Tyr-278 provides a ligand contact to 1D-myo-inositol 2-(L-cysteinylamino)-2-deoxy-alpha-D-glucopyranoside. 283–288 (NVAAAR) contacts acetyl-CoA.

The protein belongs to the acetyltransferase family. MshD subfamily. As to quaternary structure, monomer.

It carries out the reaction 1D-myo-inositol 2-(L-cysteinylamino)-2-deoxy-alpha-D-glucopyranoside + acetyl-CoA = mycothiol + CoA + H(+). Catalyzes the transfer of acetyl from acetyl-CoA to desacetylmycothiol (Cys-GlcN-Ins) to form mycothiol. This Mycobacterium leprae (strain Br4923) protein is Mycothiol acetyltransferase.